The primary structure comprises 369 residues: mRNA cap guanine-N(7) methyltransferase 1 (369 aa).

A disordered region spans residues 1–55 (MNKRPRDEPSSSFASAPKRQYGAGGGGYGGHGYSEERSSARRVADHYSARSNQTL). Residues 22-32 (GAGGGGYGGHG) are compositionally biased toward gly residues. Basic and acidic residues predominate over residues 33 to 48 (YSEERSSARRVADHYS). An mRNA cap 0 methyltransferase domain is found at 61 to 340 (SPIIHLKKLN…LYLAFVLRKR (280 aa)). 70 to 71 (NN) contacts mRNA. S-adenosyl-L-methionine-binding positions include Lys-74, Ala-92, Asp-114, 149–150 (DC), and 171–173 (QFA).

It belongs to the class I-like SAM-binding methyltransferase superfamily. mRNA cap 0 methyltransferase family.

The protein localises to the nucleus. It carries out the reaction a 5'-end (5'-triphosphoguanosine)-ribonucleoside in mRNA + S-adenosyl-L-methionine = a 5'-end (N(7)-methyl 5'-triphosphoguanosine)-ribonucleoside in mRNA + S-adenosyl-L-homocysteine. Functionally, mRNA-capping methyltransferase that methylates the N7 position of the added guanosine to the 5'-cap structure of mRNAs. Binds RNA containing 5'-terminal GpppC. The chain is mRNA cap guanine-N(7) methyltransferase 1 from Oryza sativa subsp. japonica (Rice).